Consider the following 488-residue polypeptide: Germacrene A hydroxylase (488 aa).

At 1–6 (MELSFT) the chain is on the cytoplasmic side. The chain crosses the membrane as a helical; Signal-anchor for type II membrane protein span at residues 7–23 (TSIAVATIVFVLFKLAT). Residues 24-488 (RPKSNKKLLP…KTHLVLVPSF (465 aa)) are Lumenal-facing. N-linked (GlcNAc...) asparagine glycosylation is found at N255, N260, and N379. C432 is a binding site for heme.

It belongs to the cytochrome P450 family. It depends on heme as a cofactor.

Its subcellular location is the endoplasmic reticulum membrane. The catalysed reaction is (+)-(R)-germacrene A + 3 reduced [NADPH--hemoprotein reductase] + 3 O2 = germacra-1(10),4,11(13)-trien-12-oate + 3 oxidized [NADPH--hemoprotein reductase] + 4 H2O + 4 H(+). It functions in the pathway secondary metabolite biosynthesis; terpenoid biosynthesis. Its function is as follows. Involved in the biosynthesis of germacrene-derived sesquiterpene lactones. Catalyzes three consecutive oxidations of germacrene A to produce germacrene A acid. Could also catalyze the three-step oxidation of non-natural substrate amorphadiene to artemisinic acid. This chain is Germacrene A hydroxylase, found in Saussurea costus (Costus).